The following is a 169-amino-acid chain: Peptide deformylase (169 aa).

Fe cation contacts are provided by cysteine 91 and histidine 133. Glutamate 134 is a catalytic residue. Histidine 137 contacts Fe cation.

Belongs to the polypeptide deformylase family. Fe(2+) is required as a cofactor.

It catalyses the reaction N-terminal N-formyl-L-methionyl-[peptide] + H2O = N-terminal L-methionyl-[peptide] + formate. In terms of biological role, removes the formyl group from the N-terminal Met of newly synthesized proteins. Requires at least a dipeptide for an efficient rate of reaction. N-terminal L-methionine is a prerequisite for activity but the enzyme has broad specificity at other positions. The polypeptide is Peptide deformylase (Citrobacter koseri (strain ATCC BAA-895 / CDC 4225-83 / SGSC4696)).